Here is a 96-residue protein sequence, read N- to C-terminus: UPF0235 protein YPN_3141 (96 aa).

It belongs to the UPF0235 family.

This is UPF0235 protein YPN_3141 from Yersinia pestis bv. Antiqua (strain Nepal516).